The primary structure comprises 897 residues: Probable basic-leucine zipper transcription factor R (897 aa).

Disordered regions lie at residues 38–88 (DDNI…NIET) and 128–198 (YQQR…NSNS). Over residues 44 to 75 (NNNNNNNNNNNNNNNNNNNNNNNNNNNNNNNN) the composition is skewed to low complexity. Over residues 76–88 (IGSPQIMNENIET) the composition is skewed to polar residues. A coiled-coil region spans residues 94–137 (QYLERLQSIQQQQHQCQTQIQQQLQNYQQQYEDQYQQRQQQYQD). The segment covering 128–140 (YQQRQQQYQDQYQ) has biased composition (low complexity). Positions 141-157 (KPYSSPPLNFNSIPPIT) are enriched in polar residues. Over residues 158–198 (NNNNNNNNNNNNNNNNNNSNSNSNSNSNSNSNSNSNSNSNS) the composition is skewed to low complexity. Coiled-coil stretches lie at residues 228 to 258 (LQQQ…QQQQ) and 330 to 407 (QQLQ…QQQQ). Positions 461–516 (LQLPTPFYSPQQQQQQHTPISSFIPPPSLPSSPPSPPSPPSPPPQQQQQQQQQQQQ) are disordered. Residues 484 to 505 (IPPPSLPSSPPSPPSPPSPPPQ) show a composition bias toward pro residues. Residues 506–516 (QQQQQQQQQQQ) show a composition bias toward low complexity. A bZIP domain is found at 557–620 (ESKESIKKYN…SIEMMRMEPE (64 aa)). The interval 559–564 (KESIKK) is basic motif. The interval 569–576 (IASRNYRL) is leucine-zipper.

This sequence belongs to the bZIP family.

It is found in the nucleus. Functionally, probable transcriptional regulator. The polypeptide is Probable basic-leucine zipper transcription factor R (bzpR) (Dictyostelium discoideum (Social amoeba)).